The following is a 431-amino-acid chain: Histidine--tRNA ligase (431 aa).

Belongs to the class-II aminoacyl-tRNA synthetase family. In terms of assembly, homodimer.

The protein localises to the cytoplasm. It catalyses the reaction tRNA(His) + L-histidine + ATP = L-histidyl-tRNA(His) + AMP + diphosphate + H(+). The protein is Histidine--tRNA ligase of Neisseria gonorrhoeae (strain ATCC 700825 / FA 1090).